The following is a 110-amino-acid chain: UPF0367 protein Syncc9605_2376 (110 aa).

This sequence belongs to the UPF0367 family.

This is UPF0367 protein Syncc9605_2376 from Synechococcus sp. (strain CC9605).